Here is a 163-residue protein sequence, read N- to C-terminus: uncharacterized protein (163 aa).

As to expression, expressed in keratinocytes.

This is an uncharacterized protein from Homo sapiens (Human).